We begin with the raw amino-acid sequence, 659 residues long: Exocyst complex component 5 (659 aa).

Residues 1–58 (MRFEEEIGSLQMLCDQFQNKINTLEKQMNEEKKDYVQKLHRLHEKNGEAIDKMKQLDH) adopt a coiled-coil conformation.

Belongs to the SEC10 family. The exocyst complex is composed of sec-3/exoc1, sec-5/exoc2, sec-6/exoc3, sec-8/exoc4, sec-10/exoc5, sec-15/exoc6, exo-70/exoc7 and exo-84/exoc8.

Its function is as follows. Component of the exocyst complex involved in the docking of exocytic vesicles with fusion sites on the plasma membrane. This chain is Exocyst complex component 5 (sec-10), found in Caenorhabditis elegans.